A 434-amino-acid chain; its full sequence is MFS-type transporter AFUA_1G00970 (434 aa).

A run of 12 helical transmembrane segments spans residues 21-41 (VIGGTCALLCTVGFVVAFGVF), 60-80 (WIGSASIFLLYVSAPICGVLV), 87-107 (VLLIAGSIGVLVAIFMISLCS), 112-132 (IFLAQAVLLGISMGFVTWPPF), 145-165 (LALGVITGGSSVGGIVWSIMI), 182-202 (VLGFTMLPLLAFACISITEPP), 240-260 (VFISICVGFGLAFLGLFNPFF), 278-298 (YMISIMNAATLFGRVIPGIVA), 301-321 (VGHYNVMIFVLLASGITSFCW), 327-347 (LTGLVIWSIAYGFSSGAILSL), 364-384 (AIGFLQGSLAVTVLVGSPIGG), and 393-413 (LSLSMFTGATLVMGAVVMGYA). Positions 201-225 (PPKQSQPQPRPALEATVEGGSASPT) are disordered.

The protein belongs to the major facilitator superfamily. Monocarboxylate porter (TC 2.A.1.13) family.

The protein localises to the cell membrane. Its function is as follows. MFS-type transporter; part of the gene cluster that mediates the biosynthesis of fumigermin that inhibits germination of spores of the inducing S.rapamycinicus, and thus helps the fungus to defend resources in the shared habitat against a bacterial competitor. May be involved in the secretion of fumigermin. The chain is MFS-type transporter AFUA_1G00970 from Aspergillus fumigatus (strain ATCC MYA-4609 / CBS 101355 / FGSC A1100 / Af293) (Neosartorya fumigata).